The primary structure comprises 360 residues: Peptide chain release factor 1 (360 aa).

Q235 is modified (N5-methylglutamine). Residues 285-295 are compositionally biased toward basic and acidic residues; the sequence is RQAAEQTDMRR. The disordered stretch occupies residues 285 to 309; sequence RQAAEQTDMRRNLLGSGDRSDKIRT.

Belongs to the prokaryotic/mitochondrial release factor family. Methylated by PrmC. Methylation increases the termination efficiency of RF1.

The protein resides in the cytoplasm. Functionally, peptide chain release factor 1 directs the termination of translation in response to the peptide chain termination codons UAG and UAA. The chain is Peptide chain release factor 1 from Haemophilus influenzae (strain 86-028NP).